The primary structure comprises 143 residues: General odorant-binding protein 28a (143 aa).

The signal sequence occupies residues 1 to 21; sequence MQSTPIILVAIVLLGAALVRA. 3 disulfides stabilise this stretch: cysteine 38–cysteine 69, cysteine 65–cysteine 123, and cysteine 113–cysteine 132.

Expressed in antenna, mostly on the medial and posterior surface of the third antennal segment.

The protein resides in the secreted. The protein is General odorant-binding protein 28a (Obp28a) of Drosophila melanogaster (Fruit fly).